We begin with the raw amino-acid sequence, 631 residues long: ATP-dependent RNA helicase mrh4, mitochondrial (631 aa).

The transit peptide at 1–45 (MNRLGRLPLPLPPSVCLFCRFRATASLPSSLQATRSMATARLRRR) directs the protein to the mitochondrion. The disordered stretch occupies residues 68-112 (KERFGPFAGMNQTEARIRETPRARSRAAQKRSGEPEEDSQKESPL). Positions 98 to 108 (RSGEPEEDSQK) are enriched in basic and acidic residues. The Q motif signature appears at 141–174 (TSFDQFQLLPVVRNSISSQALPGLVDVTPTPIQR). Basic and acidic residues predominate over residues 180–193 (LLEEPKTEKKPTKA). The interval 180-199 (LLEEPKTEKKPTKADDDEPR) is disordered. The Helicase ATP-binding domain occupies 194–406 (DDDEPRYDQY…RKRYPDIKRL (213 aa)). 207–214 (AETGSGKT) provides a ligand contact to ATP. Residues 229–249 (EARDKELEKKEQEEKAREREE) are disordered. The DEAD box motif lies at 353–356 (DEAD). A Helicase C-terminal domain is found at 455-631 (GPYASYVAPK…EGMFRGQALI (177 aa)).

It belongs to the DEAD box helicase family. MRH4 subfamily.

The protein localises to the mitochondrion. The enzyme catalyses ATP + H2O = ADP + phosphate + H(+). Functionally, ATP-binding RNA helicase involved in mitochondrial RNA metabolism. Required for maintenance of mitochondrial DNA. The chain is ATP-dependent RNA helicase mrh4, mitochondrial (mrh4) from Aspergillus fumigatus (strain ATCC MYA-4609 / CBS 101355 / FGSC A1100 / Af293) (Neosartorya fumigata).